A 312-amino-acid polypeptide reads, in one-letter code: Olfactory receptor 2M5 (312 aa).

Over 1–25 (MAWENQTFNSDFILLGIFNHSPTHT) the chain is Extracellular. N5 is a glycosylation site (N-linked (GlcNAc...) asparagine). A helical membrane pass occupies residues 26-49 (FLFFLVLAIFSVAFMGNSVMVLLI). The Cytoplasmic portion of the chain corresponds to 50 to 57 (YLDTQLHT). Residues 58–79 (PMYFLLSQLFLMDLMLICSTVP) form a helical membrane-spanning segment. Topologically, residues 80-100 (KMAFNYLSGSKSISMAGCATQ) are extracellular. C97 and C189 are oxidised to a cystine. The helical transmembrane segment at 101–120 (IFFYVSLLGSECFLLAVMSY) threads the bilayer. Residues 121–139 (DRYIAICHPLRYTNLMRPK) lie on the Cytoplasmic side of the membrane. The chain crosses the membrane as a helical span at residues 140–158 (ICGLMTAFSWILGSMDAII). The Extracellular portion of the chain corresponds to 159 to 195 (DAVATFSFSYCGSREIAHFFCDFPSLLILSCNDTSIF). The helical transmembrane segment at 196-219 (EKVLFICCIVMIVFPVAIIIASYA) threads the bilayer. The Cytoplasmic segment spans residues 220 to 236 (RVILAVIHMGSGEGRRK). The chain crosses the membrane as a helical span at residues 237-259 (AFTTCSSHLMVVGMYYGAGLFMY). Residues 260–272 (IRPTSDRSPMQDK) lie on the Extracellular side of the membrane. Residues 273-292 (LVSVFYTILTPMLNPLIYSL) form a helical membrane-spanning segment. The Cytoplasmic segment spans residues 293–311 (RNKEVTRALRKVLGKGKCG).

Belongs to the G-protein coupled receptor 1 family.

The protein localises to the cell membrane. Functionally, odorant receptor. This Homo sapiens (Human) protein is Olfactory receptor 2M5 (OR2M5).